A 323-amino-acid chain; its full sequence is tRNA dimethylallyltransferase (323 aa).

13-20 lines the ATP pocket; that stretch reads GPTASGKT. Residue 15–20 participates in substrate binding; it reads TASGKT. 4 interaction with substrate tRNA regions span residues 42–45, 166–170, 251–256, and 284–291; these read DSAL, QRIQR, RCVGYR, and KRQITWLR.

It belongs to the IPP transferase family. Monomer. It depends on Mg(2+) as a cofactor.

It catalyses the reaction adenosine(37) in tRNA + dimethylallyl diphosphate = N(6)-dimethylallyladenosine(37) in tRNA + diphosphate. Catalyzes the transfer of a dimethylallyl group onto the adenine at position 37 in tRNAs that read codons beginning with uridine, leading to the formation of N6-(dimethylallyl)adenosine (i(6)A). The polypeptide is tRNA dimethylallyltransferase (Acidovorax sp. (strain JS42)).